The primary structure comprises 146 residues: Small ribosomal subunit protein bS16 (146 aa).

The tract at residues 119 to 146 (GSENKGGKSKKAEEKSAEKTAEKSEGEA) is disordered. The segment covering 128-146 (KKAEEKSAEKTAEKSEGEA) has biased composition (basic and acidic residues).

The protein belongs to the bacterial ribosomal protein bS16 family.

The polypeptide is Small ribosomal subunit protein bS16 (Thermobifida fusca (strain YX)).